The following is a 151-amino-acid chain: Small ribosomal subunit protein uS15 (151 aa).

The protein belongs to the universal ribosomal protein uS15 family.

The sequence is that of Small ribosomal subunit protein uS15 (RPS13) from Glycine max (Soybean).